The sequence spans 176 residues: Interleukin-19 (176 aa).

The N-terminal stretch at 1–24 (MKTQCASTWLLGMTLILCSVHIYS) is a signal peptide. 3 disulfides stabilise this stretch: Cys-28-Cys-120, Cys-74-Cys-126, and Cys-75-Cys-128. Asn-56 is a glycosylation site (N-linked (GlcNAc...) asparagine). Residues Asn-127 and Asn-134 are each glycosylated (N-linked (GlcNAc...) asparagine).

This sequence belongs to the IL-10 family.

It is found in the secreted. Functionally, cytokine that functions as an anti-inflammatory and proangiogenic factor. Polarizes adaptive immunity to an anti-inflammatory phenotype through induction of T-helper 2 responses by both down-regulation of IFN-gamma and up-regulation of IL4 and IL5. Produced by osteocytes, stimulates granulopoiesis and neutrophil formation. Exerts its biological effect through a receptor complex consisting of a heterodimer of IL20RA and IL20RB. In turn, activates the Janus kinase (JAK) and signal transducer and activator of transcription (STAT) pathway, and importantly, STAT3. This Mus musculus (Mouse) protein is Interleukin-19 (Il19).